Reading from the N-terminus, the 149-residue chain is Large ribosomal subunit protein uL30 (149 aa).

The protein belongs to the universal ribosomal protein uL30 family. As to quaternary structure, part of the 50S ribosomal subunit.

The protein is Large ribosomal subunit protein uL30 of Methanopyrus kandleri (strain AV19 / DSM 6324 / JCM 9639 / NBRC 100938).